A 338-amino-acid polypeptide reads, in one-letter code: Uroporphyrinogen decarboxylase (338 aa).

Substrate is bound by residues 27-31 (RQAGR), Asp-77, Tyr-151, Ser-203, and His-317.

This sequence belongs to the uroporphyrinogen decarboxylase family. Homodimer.

It is found in the cytoplasm. The enzyme catalyses uroporphyrinogen III + 4 H(+) = coproporphyrinogen III + 4 CO2. It participates in porphyrin-containing compound metabolism; protoporphyrin-IX biosynthesis; coproporphyrinogen-III from 5-aminolevulinate: step 4/4. In terms of biological role, catalyzes the decarboxylation of four acetate groups of uroporphyrinogen-III to yield coproporphyrinogen-III. The polypeptide is Uroporphyrinogen decarboxylase (Wolbachia sp. subsp. Drosophila simulans (strain wRi)).